We begin with the raw amino-acid sequence, 156 residues long: ATP synthase subunit b (156 aa).

Residues 7-29 (LFAQMVVFLVLAWFTMKFVWPPL) form a helical membrane-spanning segment.

It belongs to the ATPase B chain family. In terms of assembly, F-type ATPases have 2 components, F(1) - the catalytic core - and F(0) - the membrane proton channel. F(1) has five subunits: alpha(3), beta(3), gamma(1), delta(1), epsilon(1). F(0) has three main subunits: a(1), b(2) and c(10-14). The alpha and beta chains form an alternating ring which encloses part of the gamma chain. F(1) is attached to F(0) by a central stalk formed by the gamma and epsilon chains, while a peripheral stalk is formed by the delta and b chains.

It localises to the cell inner membrane. In terms of biological role, f(1)F(0) ATP synthase produces ATP from ADP in the presence of a proton or sodium gradient. F-type ATPases consist of two structural domains, F(1) containing the extramembraneous catalytic core and F(0) containing the membrane proton channel, linked together by a central stalk and a peripheral stalk. During catalysis, ATP synthesis in the catalytic domain of F(1) is coupled via a rotary mechanism of the central stalk subunits to proton translocation. Component of the F(0) channel, it forms part of the peripheral stalk, linking F(1) to F(0). The sequence is that of ATP synthase subunit b from Burkholderia cenocepacia (strain ATCC BAA-245 / DSM 16553 / LMG 16656 / NCTC 13227 / J2315 / CF5610) (Burkholderia cepacia (strain J2315)).